A 405-amino-acid chain; its full sequence is L-rhamnonate dehydratase (405 aa).

The substrate site is built by His-33 and Arg-59. Asp-226, Glu-252, and Glu-280 together coordinate Mg(2+). His-329 functions as the Proton acceptor in the catalytic mechanism. Glu-349 serves as a coordination point for substrate.

Belongs to the mandelate racemase/muconate lactonizing enzyme family. RhamD subfamily. In terms of assembly, homooctamer; tetramer of dimers. Requires Mg(2+) as cofactor.

It carries out the reaction L-rhamnonate = 2-dehydro-3-deoxy-L-rhamnonate + H2O. Functionally, catalyzes the dehydration of L-rhamnonate to 2-keto-3-deoxy-L-rhamnonate (KDR). The protein is L-rhamnonate dehydratase of Escherichia coli O6:K15:H31 (strain 536 / UPEC).